The chain runs to 107 residues: Nucleoid-associated protein Rru_A3472 (107 aa).

It belongs to the YbaB/EbfC family. As to quaternary structure, homodimer.

The protein resides in the cytoplasm. It is found in the nucleoid. Its function is as follows. Binds to DNA and alters its conformation. May be involved in regulation of gene expression, nucleoid organization and DNA protection. This chain is Nucleoid-associated protein Rru_A3472, found in Rhodospirillum rubrum (strain ATCC 11170 / ATH 1.1.1 / DSM 467 / LMG 4362 / NCIMB 8255 / S1).